A 138-amino-acid polypeptide reads, in one-letter code: Host cell factor C1 regulator 1 (138 aa).

The tract at residues 76–79 (DHPY) is interaction with HCFC1. Residues 110–119 (IPEALRLLRL) carry the Nuclear export signal motif.

Interacts with HCFC1. Widely expressed.

The protein localises to the cytoplasm. It localises to the nucleus. Its function is as follows. Regulates HCFC1 activity by modulating its subcellular localization. Overexpression of HCFC1R1 leads to accumulation of HCFC1 in the cytoplasm. HCFC1R1-mediated export may provide the pool of cytoplasmic HCFC1 required for import of virion-derived VP16 into the nucleus. The sequence is that of Host cell factor C1 regulator 1 (HCFC1R1) from Homo sapiens (Human).